A 387-amino-acid chain; its full sequence is MTPTELNLKAKALLETHFDDIVLSGEISKITLHGSGHWYFDLKDERSSIACAMFKGANLKVGFKPAVGDFLELCGSVSLYPESGRYQFIATSMKKAGFGDLEAQFLALKERLQKEGLFDPRFKKSLPKFPKKVGIITSKTSAALQDMLKLIHQKEYFLAKIYIFDALTQGNNAPFSLIQALKKADDMDLDVLIIARGGGSREDLFCFNDENLAREIFKAKTPIISAIGHEIDYVISDFVADFRAPTPSAAIDTLFYSKLDIEQSLDLMEEKLMQLWNYKIQNYENLLLNLSKFFKFNSLPKIIDEKIKQSHNIEKQLNHLLANQMRYNELKLDKLQNAYLQHENFFNKSKKFICIRKNGKIANLEDLKSDDIVILSSQTSQKEAKIL.

This sequence belongs to the XseA family. In terms of assembly, heterooligomer composed of large and small subunits.

It localises to the cytoplasm. The enzyme catalyses Exonucleolytic cleavage in either 5'- to 3'- or 3'- to 5'-direction to yield nucleoside 5'-phosphates.. Functionally, bidirectionally degrades single-stranded DNA into large acid-insoluble oligonucleotides, which are then degraded further into small acid-soluble oligonucleotides. In Campylobacter jejuni subsp. jejuni serotype O:2 (strain ATCC 700819 / NCTC 11168), this protein is Exodeoxyribonuclease 7 large subunit.